The primary structure comprises 205 residues: Small ribosomal subunit protein uS4 (205 aa).

Positions 1–12 are enriched in basic residues; that stretch reads MSKRVQAKHKLD. The tract at residues 1 to 49 is disordered; it reads MSKRVQAKHKLDRRMGQNIWGRPKSPVNRREYGPGQHGQRRKGKMSDFG. In terms of domain architecture, S4 RNA-binding spans 94–155; that stretch reads RRLDAVVYRS…ASRQLEIVVV (62 aa).

It belongs to the universal ribosomal protein uS4 family. In terms of assembly, part of the 30S ribosomal subunit. Contacts protein S5. The interaction surface between S4 and S5 is involved in control of translational fidelity.

Functionally, one of the primary rRNA binding proteins, it binds directly to 16S rRNA where it nucleates assembly of the body of the 30S subunit. In terms of biological role, with S5 and S12 plays an important role in translational accuracy. The sequence is that of Small ribosomal subunit protein uS4 from Methylorubrum populi (strain ATCC BAA-705 / NCIMB 13946 / BJ001) (Methylobacterium populi).